Here is an 831-residue protein sequence, read N- to C-terminus: V-type proton ATPase 116 kDa subunit a1 (831 aa).

The Cytoplasmic segment spans residues 1–388; sequence MGELFRSEEM…DAYGIGSYRE (388 aa). A helical membrane pass occupies residues 389-407; that stretch reads INPAPYTIITFPFLFAVMF. Residues 408–409 are Vacuolar-facing; it reads GD. Residues 410 to 426 traverse the membrane as a helical segment; that stretch reads FGHGILMTLFAVWMVVR. The Cytoplasmic portion of the chain corresponds to 427 to 441; it reads ESRILSQKIDNELFS. The chain crosses the membrane as a helical span at residues 442–471; it reads MMFSGRYIILLMGLFSTYTGLIYNDCFSKA. The Vacuolar portion of the chain corresponds to 472-534; sequence LNLFGSSWSV…ATNKLTFLNS (63 aa). Residues 535 to 554 form a helical membrane-spanning segment; sequence FKMKMSVILGIIHMIFGVAL. Over 555–572 the chain is Cytoplasmic; it reads SVLNHIYFKKPLNIYLSF. A helical membrane pass occupies residues 573–593; the sequence is IPEMIFMTTLFGYLVILIIYK. The Vacuolar portion of the chain corresponds to 594–638; that stretch reads WCAYDVSTSMVAPSLLIHFINMFLFSYQDTSLPMLYKGQMGLQCF. Residues 639–658 form a helical membrane-spanning segment; that stretch reads LVVCAIICVPWMLVLKPLIL. The Cytoplasmic segment spans residues 659-718; that stretch reads RRQYLRRKHLGTHNFGGIRVGNGPTEEDAEIIQHDQLSMHSDEEEEFDFGDTVVHQAIHT. A helical transmembrane segment spans residues 719-743; sequence IEYCLGCISNTASYLRLWALSLAHA. At 744-764 the chain is on the vacuolar side; that stretch reads QLSEVLWTMVMHIGLNIRSLG. A helical membrane pass occupies residues 765 to 803; sequence GGIALVFIFSAFATLTIAILLIMEGLSAFLHALRLHWVE. At 804-831 the chain is on the cytoplasmic side; sequence FRNKFYMGTGFKFLPFSFETIWEGKFDD.

The protein belongs to the V-ATPase 116 kDa subunit family. As to quaternary structure, V-ATPase is a heteromultimeric enzyme made up of two complexes: the ATP-hydrolytic V1 complex and the proton translocation V0 complex. The V1 complex consists of three catalytic AB heterodimers that form a heterohexamer, three peripheral stalks each consisting of EG heterodimers, one central rotor including subunits D and F, and the regulatory subunits C and H. The proton translocation complex V0 consists of the proton transport subunit a, a ring of proteolipid subunits c9c'', rotary subunit d, subunits e and f, and two accessory subunits.

Its subcellular location is the cytoplasmic vesicle. The protein localises to the clathrin-coated vesicle membrane. It localises to the secretory vesicle. The protein resides in the synaptic vesicle membrane. It is found in the melanosome. In terms of biological role, subunit of the V0 complex of vacuolar(H+)-ATPase (V-ATPase), a multisubunit enzyme composed of a peripheral complex (V1) that hydrolyzes ATP and a membrane integral complex (V0) that translocates protons. V-ATPase is responsible for acidifying and maintaining the pH of intracellular compartments and in some cell types, is targeted to the plasma membrane, where it is responsible for acidifying the extracellular environment. Required for assembly and activity of the vacuolar ATPase. This is V-type proton ATPase 116 kDa subunit a1 (atp6v0a1) from Xenopus laevis (African clawed frog).